The chain runs to 368 residues: Cytochrome-c peroxidase IdrP2 (368 aa).

The first 27 residues, 1-27 (MKWHRGRLTQTLGAMGLTATLTVAAQA), serve as a signal peptide directing secretion. 2 consecutive Cytochrome c domains span residues 48–158 (AMIE…ALWQ) and 201–346 (KEAQ…LTLS). Positions 70, 73, 74, 216, 219, and 220 each coordinate heme c.

In terms of assembly, the iodate reductase (Idr) complex is composed of a molybdopterin-dependent iodate reductase (IdrA and IdrB subunits) and two associated peroxidases (IdrP1 and IdrP2). Heme c is required as a cofactor.

It is found in the periplasm. The enzyme catalyses 2 Fe(II)-[cytochrome c] + H2O2 + 2 H(+) = 2 Fe(III)-[cytochrome c] + 2 H2O. Its function is as follows. Involved in iodate respiration. Probably reduces the H(2)O(2) produced by IdrA/IdrB to H(2)O, using a reduced cytochrome c as the electron donor. The polypeptide is Cytochrome-c peroxidase IdrP2 (Pseudomonas sp. (strain SCT)).